We begin with the raw amino-acid sequence, 699 residues long: DNA topoisomerase 1 (699 aa).

Basic and acidic residues-rich tracts occupy residues 1–15 (MAKS…KNEL) and 22–35 (IELK…ESKG). The tract at residues 1-37 (MAKSKVVEKDKKNELDNQSADIELKGQSKNEESKGGK) is disordered. The Toprim domain maps to 38–146 (KKVIIVESPA…NIITFTEITE (109 aa)). Mg(2+) is bound by residues glutamate 44 and aspartate 115. One can recognise a Topo IA-type catalytic domain in the interval 160–583 (DMNKVNAQLA…SFLKEFNKDL (424 aa)). The interval 194 to 199 (SAGRVQ) is interaction with DNA. Catalysis depends on tyrosine 324, which acts as the O-(5'-phospho-DNA)-tyrosine intermediate. The C4-type zinc-finger motif lies at 601 to 624 (CEDCSGNYKLKVGKYGLYLHCPNC). The segment at 649-699 (QESQEENGEKNSVQSEESSANSGNRKFYRKRRTSGSKKSSTKSASSKAKKK) is disordered. Residues 661 to 672 (VQSEESSANSGN) are compositionally biased toward polar residues. Over residues 674 to 683 (KFYRKRRTSG) the composition is skewed to basic residues. Low complexity predominate over residues 684–699 (SKKSSTKSASSKAKKK).

This sequence belongs to the type IA topoisomerase family. As to quaternary structure, monomer. Requires Mg(2+) as cofactor.

The catalysed reaction is ATP-independent breakage of single-stranded DNA, followed by passage and rejoining.. Functionally, releases the supercoiling and torsional tension of DNA, which is introduced during the DNA replication and transcription, by transiently cleaving and rejoining one strand of the DNA duplex. Introduces a single-strand break via transesterification at a target site in duplex DNA. The scissile phosphodiester is attacked by the catalytic tyrosine of the enzyme, resulting in the formation of a DNA-(5'-phosphotyrosyl)-enzyme intermediate and the expulsion of a 3'-OH DNA strand. The free DNA strand then undergoes passage around the unbroken strand, thus removing DNA supercoils. Finally, in the religation step, the DNA 3'-OH attacks the covalent intermediate to expel the active-site tyrosine and restore the DNA phosphodiester backbone. The chain is DNA topoisomerase 1 from Fervidobacterium islandicum.